The primary structure comprises 35 residues: Photosystem II reaction center protein T (35 aa).

The helical transmembrane segment at 3 to 23 (ALVYTFLLIGTLGIIFFAIFF) threads the bilayer.

It belongs to the PsbT family. In terms of assembly, PSII is composed of 1 copy each of membrane proteins PsbA, PsbB, PsbC, PsbD, PsbE, PsbF, PsbH, PsbI, PsbJ, PsbK, PsbL, PsbM, PsbT, PsbY, PsbZ, Psb30/Ycf12, at least 3 peripheral proteins of the oxygen-evolving complex and a large number of cofactors. It forms dimeric complexes.

The protein resides in the plastid. It localises to the chloroplast thylakoid membrane. In terms of biological role, found at the monomer-monomer interface of the photosystem II (PS II) dimer, plays a role in assembly and dimerization of PSII. PSII is a light-driven water plastoquinone oxidoreductase, using light energy to abstract electrons from H(2)O, generating a proton gradient subsequently used for ATP formation. In Coleochaete orbicularis (Charophycean green alga), this protein is Photosystem II reaction center protein T.